The sequence spans 173 residues: Transcription factor E (173 aa).

In terms of domain architecture, HTH TFE/IIEalpha-type spans 3–88 (NNPIIQQVLL…TWRATFTKLP (86 aa)).

It belongs to the TFE family. Monomer. Interaction with RNA polymerase subunits RpoF and RpoE is necessary for Tfe stimulatory transcription activity. Able to interact with Tbp and RNA polymerase in the absence of DNA promoter. Interacts both with the preinitiation and elongation complexes.

Transcription factor that plays a role in the activation of archaeal genes transcribed by RNA polymerase. Facilitates transcription initiation by enhancing TATA-box recognition by TATA-box-binding protein (Tbp), and transcription factor B (Tfb) and RNA polymerase recruitment. Not absolutely required for transcription in vitro, but particularly important in cases where Tbp or Tfb function is not optimal. It dynamically alters the nucleic acid-binding properties of RNA polymerases by stabilizing the initiation complex and destabilizing elongation complexes. Seems to translocate with the RNA polymerase following initiation and acts by binding to the non template strand of the transcription bubble in elongation complexes. This chain is Transcription factor E, found in Methanococcus aeolicus (strain ATCC BAA-1280 / DSM 17508 / OCM 812 / Nankai-3).